The sequence spans 431 residues: MATATSGSGLHLEAIDRIGSIPLVESSVKRVETIYDKVKNNNRLFSWYFETAEATISAAYETIQPAVKLFEPSIQRLDNVMCKSLDILEQRIPLVYLPPEMMYWNTKEYMSDHLVRPVLKRADSVKQIGNAVLESPLTTYAAERIDGAFTVGDKFVDKYLVPIQTDQDQTDVKKLVSALNDNFSPIRQQLNRMFGHKSPQEDDNEAVPDERGAIKAIHHGQRFSRKLKRRLTQRTIAEARALKKQSKEAIHVLFYAAELIATDPKQAVQKAKELWVYLSADEPENQARPATLEQLIVLLTRESARRVVHLVNFSAHVAANIPRNLAHTTTEVAHHIIYINHRIITISRLDKVKTISKEEAESLFKRMLAFYGSLQGLTNAYLERVASFLSGRMEAEKVTGSDGGNSNHRSSRRRQDPNHYSATHNNINGVY.

The segment at 397 to 431 is disordered; it reads KVTGSDGGNSNHRSSRRRQDPNHYSATHNNINGVY. The span at 418–431 shows a compositional bias: polar residues; sequence NHYSATHNNINGVY.

Belongs to the perilipin family.

The protein localises to the cytoplasm. The protein resides in the lipid droplet. Functionally, required for normal deposition of neutral lipids in the oocyte. This is Lipid storage droplets surface-binding protein 1 from Drosophila melanogaster (Fruit fly).